Consider the following 99-residue polypeptide: RNA-binding protein HI_1333 (99 aa).

A CRM domain is found at 2 to 98; it reads TTLSTKQKQF…SEEAKIQLPR (97 aa).

This Haemophilus influenzae (strain ATCC 51907 / DSM 11121 / KW20 / Rd) protein is RNA-binding protein HI_1333.